We begin with the raw amino-acid sequence, 241 residues long: Proteasome subunit alpha type-5 (241 aa).

This sequence belongs to the peptidase T1A family. In terms of assembly, the 26S proteasome consists of a 20S proteasome core and two 19S regulatory subunits. The 20S proteasome core is composed of 28 subunits that are arranged in four stacked rings, resulting in a barrel-shaped structure. The two end rings are each formed by seven alpha subunits, and the two central rings are each formed by seven beta subunits. The catalytic chamber with the active sites is on the inside of the barrel.

It localises to the cytoplasm. Its subcellular location is the nucleus. Its function is as follows. The proteasome is a multicatalytic proteinase complex which is characterized by its ability to cleave peptides with Arg, Phe, Tyr, Leu, and Glu adjacent to the leaving group at neutral or slightly basic pH. The proteasome has an ATP-dependent proteolytic activity. The protein is Proteasome subunit alpha type-5 (psmA5) of Dictyostelium discoideum (Social amoeba).